Consider the following 333-residue polypeptide: Serine/threonine-protein phosphatase PP1-beta (333 aa).

Aspartate 63, histidine 65, aspartate 91, and asparagine 123 together coordinate Mn(2+). Catalysis depends on histidine 124, which acts as the Proton donor. 2 residues coordinate Mn(2+): histidine 172 and histidine 247. The segment at 306–333 (GAGGVGSNRPVTPPRNAPAAQPKKGAKK) is disordered. The span at 322 to 333 (APAAQPKKGAKK) shows a compositional bias: low complexity.

Belongs to the PPP phosphatase family. PP-1 subfamily. As to quaternary structure, interacts with lab-1; the interaction is direct. Interacts with knl-1; the interaction is direct. Requires Mn(2+) as cofactor.

The protein localises to the cytoplasm. It localises to the nucleus. The enzyme catalyses O-phospho-L-seryl-[protein] + H2O = L-seryl-[protein] + phosphate. It carries out the reaction O-phospho-L-threonyl-[protein] + H2O = L-threonyl-[protein] + phosphate. In terms of biological role, serine/threonine-protein phosphatase essential for chromosomal dynamics during meiosis and mitosis. Antagonizes the function of air-2 in the regulation of chromosome cohesion. Dephosphorylates histone H3 at 'Ser-10'. Also involved in the activation of chloride channel clh-3 during cell swelling and meiotic maturation. Essential for embryogenesis. This chain is Serine/threonine-protein phosphatase PP1-beta (gsp-2), found in Caenorhabditis briggsae.